A 147-amino-acid polypeptide reads, in one-letter code: 3-dehydroquinate dehydratase (147 aa).

The active-site Proton acceptor is the Tyr23. Residues Asn75, His81, and Asp88 each coordinate substrate. His101 acts as the Proton donor in catalysis. Substrate contacts are provided by residues 102–103 (LS) and Arg112.

It belongs to the type-II 3-dehydroquinase family. As to quaternary structure, homododecamer.

It carries out the reaction 3-dehydroquinate = 3-dehydroshikimate + H2O. It functions in the pathway metabolic intermediate biosynthesis; chorismate biosynthesis; chorismate from D-erythrose 4-phosphate and phosphoenolpyruvate: step 3/7. Catalyzes a trans-dehydration via an enolate intermediate. The protein is 3-dehydroquinate dehydratase of Stenotrophomonas maltophilia (strain K279a).